Consider the following 388-residue polypeptide: Lipid-A-disaccharide synthase (388 aa).

Belongs to the LpxB family.

The catalysed reaction is a lipid X + a UDP-2-N,3-O-bis[(3R)-3-hydroxyacyl]-alpha-D-glucosamine = a lipid A disaccharide + UDP + H(+). Its pathway is bacterial outer membrane biogenesis; LPS lipid A biosynthesis. Its function is as follows. Condensation of UDP-2,3-diacylglucosamine and 2,3-diacylglucosamine-1-phosphate to form lipid A disaccharide, a precursor of lipid A, a phosphorylated glycolipid that anchors the lipopolysaccharide to the outer membrane of the cell. The protein is Lipid-A-disaccharide synthase of Burkholderia pseudomallei (strain K96243).